The following is a 125-amino-acid chain: SOSS complex subunit C homolog A (125 aa).

Residues 1-16 (MAFPNTSAQQAETNSK) are compositionally biased toward polar residues. Disordered stretches follow at residues 1-20 (MAFP…SLEE), 38-74 (SNTN…AAFN), and 105-125 (PATP…NNPK).

The protein belongs to the SOSS-C family.

This is SOSS complex subunit C homolog A from Drosophila willistoni (Fruit fly).